The chain runs to 381 residues: Nitric oxide reductase FlRd-NAD(+) reductase (381 aa).

Belongs to the FAD-dependent oxidoreductase family. FAD serves as cofactor.

It localises to the cytoplasm. It carries out the reaction 2 reduced [nitric oxide reductase rubredoxin domain] + NAD(+) + H(+) = 2 oxidized [nitric oxide reductase rubredoxin domain] + NADH. It participates in nitrogen metabolism; nitric oxide reduction. One of at least two accessory proteins for anaerobic nitric oxide (NO) reductase. Reduces the rubredoxin moiety of NO reductase. The protein is Nitric oxide reductase FlRd-NAD(+) reductase of Aliivibrio fischeri (strain ATCC 700601 / ES114) (Vibrio fischeri).